Reading from the N-terminus, the 385-residue chain is Cytochrome b (385 aa).

4 helical membrane passes run 34–54 (FGSILGLCLFLQIATGLILTM), 78–99 (WFIRNFHITGASLFFSCMFIHI), 114–134 (WYSGVILFICAMVTAFFGYVL), and 179–199 (FLVLHFLVPFLMIAVSLTHLL). Heme b-binding residues include H84 and H98. Heme b contacts are provided by H183 and H197. An a ubiquinone-binding site is contributed by H202. The next 4 membrane-spanning stretches (helical) occupy residues 227–247 (FKDILGFLITLSLIFLGSTLF), 289–309 (LMGVFALIMSLSVLLFMPFLI), 321–341 (FMQFTFWLMISNFILLSWLGA), and 348–368 (YTIMSQVTSFLYFFIFLFLFP).

This sequence belongs to the cytochrome b family. The cytochrome bc1 complex contains 3 respiratory subunits (MT-CYB, CYC1 and UQCRFS1), 2 core proteins (UQCRC1 and UQCRC2) and probably 6 low-molecular weight proteins. Heme b is required as a cofactor.

Its subcellular location is the mitochondrion inner membrane. Its function is as follows. Component of the ubiquinol-cytochrome c reductase complex (complex III or cytochrome b-c1 complex) that is part of the mitochondrial respiratory chain. The b-c1 complex mediates electron transfer from ubiquinol to cytochrome c. Contributes to the generation of a proton gradient across the mitochondrial membrane that is then used for ATP synthesis. This chain is Cytochrome b (MT-CYB), found in Myxine glutinosa (Atlantic hagfish).